Reading from the N-terminus, the 355-residue chain is 3-isopropylmalate dehydrogenase (355 aa).

NAD(+) is bound at residue 77-90 (GAKWDNLPREKRPE). Substrate-binding residues include Arg97, Arg107, Arg135, and Asp220. Positions 220, 244, and 248 each coordinate Mg(2+). 277 to 289 (GSAPDIAGQGIAN) contributes to the NAD(+) binding site.

This sequence belongs to the isocitrate and isopropylmalate dehydrogenases family. LeuB type 1 subfamily. Homodimer. Requires Mg(2+) as cofactor. Mn(2+) is required as a cofactor.

The protein resides in the cytoplasm. It carries out the reaction (2R,3S)-3-isopropylmalate + NAD(+) = 4-methyl-2-oxopentanoate + CO2 + NADH. It functions in the pathway amino-acid biosynthesis; L-leucine biosynthesis; L-leucine from 3-methyl-2-oxobutanoate: step 3/4. Catalyzes the oxidation of 3-carboxy-2-hydroxy-4-methylpentanoate (3-isopropylmalate) to 3-carboxy-4-methyl-2-oxopentanoate. The product decarboxylates to 4-methyl-2 oxopentanoate. The sequence is that of 3-isopropylmalate dehydrogenase from Sulfurimonas denitrificans (strain ATCC 33889 / DSM 1251) (Thiomicrospira denitrificans (strain ATCC 33889 / DSM 1251)).